The following is a 120-amino-acid chain: MLRKCSDKQRKRMKRKVHIRKRVYGTAVRPRMTVFRSNRNISVQVIDDDARSTLASVSTLEKDFVLLRANVSSGLQIGEEIGRRLLEKHIDTVIFDRNGYLYHGVVAAVADGARKAGVKF.

Belongs to the universal ribosomal protein uL18 family. Part of the 50S ribosomal subunit; part of the 5S rRNA/L5/L18/L25 subcomplex. Contacts the 5S and 23S rRNAs.

Functionally, this is one of the proteins that bind and probably mediate the attachment of the 5S RNA into the large ribosomal subunit, where it forms part of the central protuberance. This chain is Large ribosomal subunit protein uL18, found in Treponema pallidum (strain Nichols).